A 1871-amino-acid polypeptide reads, in one-letter code: Plexin-A3 (1871 aa).

The signal sequence occupies residues 1 to 19 (MPSVCLLLLLFLAVGGALG). Residues 20–488 (NRPFRAFVVT…SEKQVSQLPV (469 aa)) enclose the Sema domain. Over 20–1220 (NRPFRAFVVT…SAERALTLPA (1201 aa)) the chain is Extracellular. N59 carries an N-linked (GlcNAc...) asparagine glycan. 9 cysteine pairs are disulfide-bonded: C77-C86, C112-C120, C266-C387, C282-C338, C356-C375, C491-C508, C497-C539, C500-C517, and C511-C523. N548 carries N-linked (GlcNAc...) asparagine glycosylation. A disulfide bond links C574 and C594. Residues N637, N738, and N746 are each glycosylated (N-linked (GlcNAc...) asparagine). 4 consecutive IPT/TIG domains span residues 840 to 933 (PRIT…YSFV), 935 to 1020 (PTFD…YTYT), 1023 to 1122 (PTVT…FTYY), and 1125 to 1211 (PSFE…LHIS). 5 N-linked (GlcNAc...) asparagine glycosylation sites follow: N1009, N1036, N1073, N1115, and N1162. The chain crosses the membrane as a helical span at residues 1221-1241 (MMGLAAGGGLLLLAITAVLVA). Residues 1242 to 1871 (YKRKTQDADR…QIISLVSSDS (630 aa)) are Cytoplasmic-facing. S1596 is modified (phosphoserine).

Belongs to the plexin family. In terms of assembly, interacts with CBFA2T3/MTG16.

Its subcellular location is the cell membrane. In terms of biological role, coreceptor for SEMA3A and SEMA3F. Necessary for signaling by class 3 semaphorins and subsequent remodeling of the cytoskeleton. Plays a role in axon guidance in the developing nervous system. Regulates the migration of sympathetic neurons, but not of neural crest precursors. Required for normal dendrite spine morphology in pyramidal neurons. May play a role in regulating semaphorin-mediated programmed cell death in the developing nervous system. Class 3 semaphorins bind to a complex composed of a neuropilin and a plexin. The plexin modulates the affinity of the complex for specific semaphorins, and its cytoplasmic domain is required for the activation of down-stream signaling events in the cytoplasm. The protein is Plexin-A3 (PLXNA3) of Homo sapiens (Human).